A 386-amino-acid chain; its full sequence is S-adenosylmethionine synthase (386 aa).

Residue His14 coordinates ATP. Mg(2+) is bound at residue Asp16. Residue Glu42 participates in K(+) binding. L-methionine-binding residues include Glu55 and Gln98. A flexible loop region spans residues 98-108; that stretch reads QSGDISQGVDG. Residues 162-164, 230-231, Asp239, 245-246, Ala262, and Lys266 contribute to the ATP site; these read DSK, RF, and RK. Asp239 is an L-methionine binding site. Lys270 serves as a coordination point for L-methionine.

It belongs to the AdoMet synthase family. As to quaternary structure, homotetramer; dimer of dimers. It depends on Mg(2+) as a cofactor. The cofactor is K(+).

It localises to the cytoplasm. It catalyses the reaction L-methionine + ATP + H2O = S-adenosyl-L-methionine + phosphate + diphosphate. It functions in the pathway amino-acid biosynthesis; S-adenosyl-L-methionine biosynthesis; S-adenosyl-L-methionine from L-methionine: step 1/1. Catalyzes the formation of S-adenosylmethionine (AdoMet) from methionine and ATP. The overall synthetic reaction is composed of two sequential steps, AdoMet formation and the subsequent tripolyphosphate hydrolysis which occurs prior to release of AdoMet from the enzyme. In Salinibacter ruber (strain DSM 13855 / M31), this protein is S-adenosylmethionine synthase.